The following is a 322-amino-acid chain: CRISPR-associated endonuclease Cas1 (322 aa).

E149, H214, and E229 together coordinate Mn(2+).

This sequence belongs to the CRISPR-associated endonuclease Cas1 family. In terms of assembly, homodimer, forms a heterotetramer with a Cas2 homodimer. Mg(2+) serves as cofactor. The cofactor is Mn(2+).

Functionally, CRISPR (clustered regularly interspaced short palindromic repeat), is an adaptive immune system that provides protection against mobile genetic elements (viruses, transposable elements and conjugative plasmids). CRISPR clusters contain spacers, sequences complementary to antecedent mobile elements, and target invading nucleic acids. CRISPR clusters are transcribed and processed into CRISPR RNA (crRNA). Acts as a dsDNA endonuclease. Involved in the integration of spacer DNA into the CRISPR cassette. In Pyrococcus horikoshii (strain ATCC 700860 / DSM 12428 / JCM 9974 / NBRC 100139 / OT-3), this protein is CRISPR-associated endonuclease Cas1.